The following is a 360-amino-acid chain: Archaemetzincin-2 (360 aa).

H254 lines the Zn(2+) pocket. The active-site Proton acceptor is the E255. H258, H264, C265, C270, C289, and C292 together coordinate Zn(2+).

Belongs to the peptidase M54 family. Requires Zn(2+) as cofactor.

In terms of biological role, probable zinc metalloprotease. The protein is Archaemetzincin-2 (AMZ2) of Pongo abelii (Sumatran orangutan).